We begin with the raw amino-acid sequence, 290 residues long: L-fucono-1,5-lactonase (290 aa).

This sequence belongs to the metallo-dependent hydrolases superfamily.

It catalyses the reaction L-fucono-1,5-lactone + H2O = L-fuconate + H(+). The enzyme catalyses L-fucono-1,4-lactone + H2O = L-fuconate + H(+). The catalysed reaction is D-arabinono-1,4-lactone + H2O = D-arabinonate + H(+). It carries out the reaction L-xylono-1,4-lactone + H2O = L-xylonate + H(+). It catalyses the reaction L-galactono-1,4-lactone + H2O = L-galactonate + H(+). Functionally, catalyzes the hydrolysis of L-fucono-1,5-lactone to L-fuconate. Can also hydrolyze L-fucono-1,4-lactone, L-galactono-1,4-lactone D-arabinono-1,4-lactone and L-xylono-1,4-lactone. This chain is L-fucono-1,5-lactonase, found in Burkholderia ambifaria (strain ATCC BAA-244 / DSM 16087 / CCUG 44356 / LMG 19182 / AMMD) (Burkholderia cepacia (strain AMMD)).